Consider the following 104-residue polypeptide: Type IV secretion system protein PtlB homolog (104 aa).

Residues 30-50 form a helical membrane-spanning segment; sequence IALLGIWFSIAFLALFPVALL.

The protein belongs to the virB3 family.

The protein localises to the cell membrane. The protein is Type IV secretion system protein PtlB homolog (ptlB) of Bordetella bronchiseptica (strain ATCC BAA-588 / NCTC 13252 / RB50) (Alcaligenes bronchisepticus).